A 489-amino-acid chain; its full sequence is Carboxyl-terminal-processing peptidase 1, chloroplastic (489 aa).

The span at 1–20 (MRLLLPFSSPLSATSSPSTP) shows a compositional bias: low complexity. The tract at residues 1 to 27 (MRLLLPFSSPLSATSSPSTPQFIPELP) is disordered. The PDZ domain maps to 189–273 (FSRMSKYDIT…TFVVLKVKHG (85 aa)). Residues serine 403 and lysine 428 each act as charge relay system in the active site.

The protein belongs to the peptidase S41A family.

It localises to the plastid. The protein resides in the chloroplast thylakoid lumen. The catalysed reaction is The enzyme shows specific recognition of a C-terminal tripeptide, Xaa-Yaa-Zaa, in which Xaa is preferably Ala or Leu, Yaa is preferably Ala or Tyr, and Zaa is preferably Ala, but then cleaves at a variable distance from the C-terminus. A typical cleavage is -Ala-Ala-|-Arg-Ala-Ala-Lys-Glu-Asn-Tyr-Ala-Leu-Ala-Ala.. In terms of biological role, protease involved in the C-terminal processing of the chloroplastic D1 protein of photosystem II. This proteolytic processing is necessary to allow the light-driven assembly of the tetranuclear manganese cluster, which is responsible for photosynthetic water oxidation. The protein is Carboxyl-terminal-processing peptidase 1, chloroplastic (CTPA1) of Arabidopsis thaliana (Mouse-ear cress).